The sequence spans 233 residues: Protein DOUBLE-STRAND BREAK FORMATION (233 aa).

Interacts with PRD1; this interaction facilitates a binding to PRD3. Specifically expressed in buds.

Required for meiotic double-strand break (DSB) formation, the initial event for meiotic recombination. This is Protein DOUBLE-STRAND BREAK FORMATION from Arabidopsis thaliana (Mouse-ear cress).